Consider the following 117-residue polypeptide: Large ribosomal subunit protein uL18 (117 aa).

Belongs to the universal ribosomal protein uL18 family. In terms of assembly, part of the 50S ribosomal subunit; part of the 5S rRNA/L5/L18/L25 subcomplex. Contacts the 5S and 23S rRNAs.

In terms of biological role, this is one of the proteins that bind and probably mediate the attachment of the 5S RNA into the large ribosomal subunit, where it forms part of the central protuberance. The protein is Large ribosomal subunit protein uL18 of Tolumonas auensis (strain DSM 9187 / NBRC 110442 / TA 4).